The following is a 108-amino-acid chain: Small ribosomal subunit protein eS25B (108 aa).

Positions 1–20 (MPPKQQLSKAAKAAAALAGG) are enriched in low complexity. The segment at 1–30 (MPPKQQLSKAAKAAAALAGGKKSKKKWSKK) is disordered. Pro-2 bears the N,N-dimethylproline; by NTM1 mark. Basic residues predominate over residues 21 to 30 (KKSKKKWSKK).

Belongs to the eukaryotic ribosomal protein eS25 family. Component of the small ribosomal subunit (SSU). Mature yeast ribosomes consist of a small (40S) and a large (60S) subunit. The 40S small subunit contains 1 molecule of ribosomal RNA (18S rRNA) and 33 different proteins (encoded by 57 genes). The large 60S subunit contains 3 rRNA molecules (25S, 5.8S and 5S rRNA) and 46 different proteins (encoded by 81 genes).

It is found in the cytoplasm. In terms of biological role, component of the ribosome, a large ribonucleoprotein complex responsible for the synthesis of proteins in the cell. The small ribosomal subunit (SSU) binds messenger RNAs (mRNAs) and translates the encoded message by selecting cognate aminoacyl-transfer RNA (tRNA) molecules. The large subunit (LSU) contains the ribosomal catalytic site termed the peptidyl transferase center (PTC), which catalyzes the formation of peptide bonds, thereby polymerizing the amino acids delivered by tRNAs into a polypeptide chain. The nascent polypeptides leave the ribosome through a tunnel in the LSU and interact with protein factors that function in enzymatic processing, targeting, and the membrane insertion of nascent chains at the exit of the ribosomal tunnel. The protein is Small ribosomal subunit protein eS25B of Saccharomyces cerevisiae (strain ATCC 204508 / S288c) (Baker's yeast).